Reading from the N-terminus, the 464-residue chain is Cysteine--tRNA ligase (464 aa).

Position 29 (C29) interacts with Zn(2+). The 'HIGH' region signature appears at 31–41; that stretch reads ATVQGDPHIGH. Residues C207, H232, and E236 each coordinate Zn(2+). A 'KMSKS' region motif is present at residues 263-267; sequence KMSKS. K266 contributes to the ATP binding site.

The protein belongs to the class-I aminoacyl-tRNA synthetase family. Monomer. Zn(2+) is required as a cofactor.

It localises to the cytoplasm. The enzyme catalyses tRNA(Cys) + L-cysteine + ATP = L-cysteinyl-tRNA(Cys) + AMP + diphosphate. In Rhodococcus jostii (strain RHA1), this protein is Cysteine--tRNA ligase.